The chain runs to 65 residues: uncharacterized protein (65 aa).

Residues 1–65 (MIALSVCWQI…ETGIGYRFML (65 aa)) constitute a DNA-binding region (ompR/PhoB-type).

This is an uncharacterized protein from Escherichia coli (strain K12).